The chain runs to 331 residues: Cytosolic arginine sensor for mTORC1 subunit 1 (331 aa).

S14 is modified (phosphoserine). The ACT 1 domain maps to 72–139 (AEATWLVMNV…SVVIHTLARE (68 aa)). 110–111 (SV) contacts L-arginine. The interval 155–174 (GDDSSNGFPQAQHGPSPTVH) is disordered. Over residues 156-174 (DDSSNGFPQAQHGPSPTVH) the composition is skewed to polar residues. Residues 262-322 (WRMVRIGGQP…SCVIDILQRR (61 aa)) enclose the ACT 2 domain. L-arginine-binding positions include G273, 279–280 (IV), and 299–303 (TFNFD).

This sequence belongs to the GATS family. In terms of assembly, forms homodimers and heterodimers with CASTOR2. Interacts with the GATOR2 complex which is composed of MIOS, SEC13, SEH1L, WDR24 and WDR59; the interaction is negatively regulated by arginine. Interacts with TM4SF5; the interaction is positively regulated by leucine and is negatively regulated by arginine. Post-translationally, phosphorylation at Ser-14 by AKT1, promoting the interaction between CASTOR1 and RNF167. In terms of processing, ubiquitinated by RNF167 via 'Lys-29'-polyubiquitination, leading to its degradation, releasing the GATOR2 complex. Ubiquitination by RNF167 is promoted by phosphorylation at Ser-14 by AKT1.

It is found in the cytoplasm. Its subcellular location is the cytosol. Its function is as follows. Functions as an intracellular arginine sensor within the amino acid-sensing branch of the TORC1 signaling pathway. As a homodimer or a heterodimer with CASTOR2, binds and inhibits the GATOR subcomplex GATOR2 and thereby mTORC1. Binding of arginine to CASTOR1 allosterically disrupts the interaction of CASTOR1-containing dimers with GATOR2 which can in turn activate mTORC1 and the TORC1 signaling pathway. This chain is Cytosolic arginine sensor for mTORC1 subunit 1, found in Rattus norvegicus (Rat).